The primary structure comprises 212 residues: Proheparin-binding EGF-like growth factor (212 aa).

An N-terminal signal peptide occupies residues 1 to 18 (MDGRVVLIHALLTAVCSA). The Extracellular portion of the chain corresponds to 19 to 167 (AVGKFGRDGP…PSTYDHTTAL (149 aa)). Positions 82–108 (SKPQGPVTPKKKGNGNKRRKGKGLGKK) are disordered. Over residues 90–106 (PKKKGNGNKRRKGKGLG) the composition is skewed to basic residues. An EGF-like domain is found at 108 to 148 (KRDPCLRKYKDFCIHGECKYIRELGAPSCICQPGYHGERCH). 3 disulfides stabilise this stretch: Cys-112/Cys-125, Cys-120/Cys-136, and Cys-138/Cys-147. Residues 153–212 (PVEHPPSTYDHTTALAVVAVVLSSLCLVIITALLMFRCHKRGVYDVENEEKIKLGITVNH) constitute a propeptide, C-terminal. The chain crosses the membrane as a helical span at residues 168–188 (AVVAVVLSSLCLVIITALLMF). The Cytoplasmic portion of the chain corresponds to 189-212 (RCHKRGVYDVENEEKIKLGITVNH).

Interacts with CNIH2.

The protein localises to the secreted. The protein resides in the extracellular space. Its subcellular location is the cell membrane. In terms of biological role, may be involved in macrophage-mediated cellular proliferation. It is mitogenic for fibroblasts and smooth muscle but not endothelial cells. It is able to bind EGF receptor/EGFR with higher affinity than EGF itself and is a far more potent mitogen for smooth muscle cells than EGF. Plays an important role in the proper development of cranial nerves by inhibiting the migration of the cranial neural crest cells (NCCs) into the odd-numbered neuromeres (r3 and r5) of the hindbrain Plays a role in mediating v-Jun-induced oncogenic transformation. The sequence is that of Proheparin-binding EGF-like growth factor (HBEGF) from Gallus gallus (Chicken).